A 120-amino-acid polypeptide reads, in one-letter code: T-cell receptor beta chain V region PHDS203 (120 aa).

The first 11 residues, 1 to 11 (VVLCFLGTGLV), serve as a signal peptide directing secretion. The tract at residues 12-106 (DMKVTQMSRY…TSVYFCAQGA (95 aa)) is v segment. A disulfide bridge connects residues cysteine 34 and cysteine 102. The interval 107–120 (PEQYFGPGTRLTVL) is j segment.

The sequence is that of T-cell receptor beta chain V region PHDS203 from Mus musculus (Mouse).